Reading from the N-terminus, the 206-residue chain is Probable GTP-binding protein EngB (206 aa).

The region spanning 8–195 (RSDEVVLVGR…EDAVNSHFDA (188 aa)) is the EngB-type G domain. GTP contacts are provided by residues 16–23 (GRSNVGKS), 41–45 (GVTRQ), 60–63 (DLPG), 140–143 (NKMD), and 175–177 (ITA). Ser23 and Thr43 together coordinate Mg(2+).

Belongs to the TRAFAC class TrmE-Era-EngA-EngB-Septin-like GTPase superfamily. EngB GTPase family. Mg(2+) is required as a cofactor.

Its function is as follows. Necessary for normal cell division and for the maintenance of normal septation. The chain is Probable GTP-binding protein EngB from Halobacterium salinarum (strain ATCC 29341 / DSM 671 / R1).